The chain runs to 145 residues: Enhancer of mRNA-decapping protein 2 (145 aa).

Disordered stretches follow at residues 1-74 (MGSE…DKAT) and 89-115 (PKKK…IDSK). Residues 29 to 42 (TKTQILVPPTQSLP) are compositionally biased toward polar residues. Residues 55-73 (QRREPRERTSKTGHEDDKA) show a composition bias toward basic and acidic residues. The span at 89–102 (PKKKSCKYKKKKTR) shows a compositional bias: basic residues.

This sequence belongs to the EDC family.

The protein localises to the cytoplasm. The protein resides in the nucleus. Its function is as follows. mRNA-binding protein which stimulates mRNA decapping by DCP1 and DCP2. This chain is Enhancer of mRNA-decapping protein 2 (EDC2), found in Saccharomyces cerevisiae (strain ATCC 204508 / S288c) (Baker's yeast).